The primary structure comprises 77 residues: Large ribosomal subunit protein bL28 (77 aa).

The interval 1–20 is disordered; that stretch reads MSRVCQVTGKGPVTGNNISH.

The protein belongs to the bacterial ribosomal protein bL28 family.

The sequence is that of Large ribosomal subunit protein bL28 from Pseudomonas fluorescens (strain SBW25).